Consider the following 478-residue polypeptide: ATP synthase subunit beta (478 aa).

160 to 167 (GGAGVGKT) serves as a coordination point for ATP.

This sequence belongs to the ATPase alpha/beta chains family. In terms of assembly, F-type ATPases have 2 components, CF(1) - the catalytic core - and CF(0) - the membrane proton channel. CF(1) has five subunits: alpha(3), beta(3), gamma(1), delta(1), epsilon(1). CF(0) has three main subunits: a(1), b(2) and c(9-12). The alpha and beta chains form an alternating ring which encloses part of the gamma chain. CF(1) is attached to CF(0) by a central stalk formed by the gamma and epsilon chains, while a peripheral stalk is formed by the delta and b chains.

It is found in the cell inner membrane. It carries out the reaction ATP + H2O + 4 H(+)(in) = ADP + phosphate + 5 H(+)(out). In terms of biological role, produces ATP from ADP in the presence of a proton gradient across the membrane. The catalytic sites are hosted primarily by the beta subunits. In Orientia tsutsugamushi (strain Boryong) (Rickettsia tsutsugamushi), this protein is ATP synthase subunit beta.